A 120-amino-acid chain; its full sequence is Adult-specific rigid cuticular protein 11.9 (120 aa).

In terms of domain architecture, Chitin-binding type R&amp;R spans 9-87 (GGAYNFGYNT…ALAAMAPKAP (79 aa)).

Component of the rigid cuticle of the spider. This Araneus diadematus (European garden spider) protein is Adult-specific rigid cuticular protein 11.9.